Reading from the N-terminus, the 272-residue chain is Dihydropteroate synthase (272 aa).

Residues 1–251 enclose the Pterin-binding domain; the sequence is MIKTKIMGIL…GVRVHNVLLN (251 aa). Residue Asn-11 participates in Mg(2+) binding. Residues Thr-51, Asp-89, Asn-108, Asp-172, Lys-208, and 244 to 246 each bind (7,8-dihydropterin-6-yl)methyl diphosphate; that span reads RVH.

It belongs to the DHPS family. As to quaternary structure, homodimer. Mg(2+) serves as cofactor.

It carries out the reaction (7,8-dihydropterin-6-yl)methyl diphosphate + 4-aminobenzoate = 7,8-dihydropteroate + diphosphate. Its pathway is cofactor biosynthesis; tetrahydrofolate biosynthesis; 7,8-dihydrofolate from 2-amino-4-hydroxy-6-hydroxymethyl-7,8-dihydropteridine diphosphate and 4-aminobenzoate: step 1/2. Catalyzes the condensation of para-aminobenzoate (pABA) with 6-hydroxymethyl-7,8-dihydropterin diphosphate (DHPt-PP) to form 7,8-dihydropteroate (H2Pte), the immediate precursor of folate derivatives. The polypeptide is Dihydropteroate synthase (folP) (Staphylococcus epidermidis (strain ATCC 35984 / DSM 28319 / BCRC 17069 / CCUG 31568 / BM 3577 / RP62A)).